Here is a 128-residue protein sequence, read N- to C-terminus: Protein Wnt-2b-B (128 aa).

Disulfide bonds link Cys3/Cys16 and Cys5/Cys11. A lipid anchor (O-palmitoleoyl serine; by PORCN) is attached at Ser8. An N-linked (GlcNAc...) asparagine glycan is attached at Asn48. Cystine bridges form between Cys90-Cys105 and Cys127-Cys128.

It belongs to the Wnt family. In terms of processing, palmitoleoylation is required for efficient binding to frizzled receptors. Depalmitoleoylation leads to Wnt signaling pathway inhibition.

The protein resides in the secreted. It localises to the extracellular space. Its subcellular location is the extracellular matrix. Its function is as follows. Ligand for members of the frizzled family of seven transmembrane receptors. Functions in the canonical Wnt/beta-catenin signaling pathway. This is Protein Wnt-2b-B (wnt2b-b) from Xenopus laevis (African clawed frog).